A 313-amino-acid polypeptide reads, in one-letter code: MTFDENISRILVKDKEYEMPFSKGLLARSLTAAGMKPSESYTLAREIERDLNEQNVLKISKDELRRRVYYTLINRDYEGIGEKYLLWRRVLKKHSIIILVGGSSGVGTSTIAFELASRLGIPSVIGTDSIREVMRRSISKDLVPMLYESSYTAWTALRRSQWDEQDTKEMHLLGFERHVEPVLLGIESIIDRSLTEGTSVIIEGTHIVPGLMGEKYQSMPNVIFLNLTLSSEETHKKRFTARAKVSDRPLERYLENFEIIKEINQYIVEKSKENKVPVIENVSISETVQKCLEIVTERFSNLNDEPIIDSDMY.

The ATP-cone domain occupies 8–95 (SRILVKDKEY…LWRRVLKKHS (88 aa)).

It belongs to the 2-phosphoglycerate kinase family. A divalent metal cation is required as a cofactor.

It carries out the reaction (2R)-2-phosphoglycerate + ATP = (2R)-2,3-bisphosphoglycerate + ADP + H(+). Its pathway is thermoadapter biosynthesis; cyclic 2,3-diphosphoglycerate biosynthesis; cyclic 2,3-diphosphoglycerate from 2-phospho-D-glycerate: step 1/2. Its function is as follows. Catalyzes the phosphorylation of 2-phosphoglycerate to 2,3-diphosphoglycerate. Involved in the biosynthesis of cyclic 2,3-bisphosphoglycerate, a thermoprotectant. The chain is 2-phosphoglycerate kinase from Methanococcus maripaludis (strain C5 / ATCC BAA-1333).